Here is a 1023-residue protein sequence, read N- to C-terminus: Rho GTPase-activating protein 11A (1023 aa).

Positions 49–239 (VPFNALPHSA…TLIDYASDIG (191 aa)) constitute a Rho-GAP domain. Phosphoserine is present on S285. The residue at position 306 (T306) is a Phosphothreonine. 2 positions are modified to phosphoserine: S316 and S318. Position 323 is a phosphothreonine (T323). Phosphoserine occurs at positions 339, 340, and 484. T508 bears the Phosphothreonine mark. The tract at residues 567–589 (TPSNLNNKHNSNITSSPLSGDEN) is disordered. A phosphoserine mark is found at S582, S585, S638, and S675. The tract at residues 714–734 (KQEFSSDEEIKKQQSPKDKLN) is disordered. A compositionally biased stretch (basic and acidic residues) spans 721–734 (EEIKKQQSPKDKLN). Residue S847 is modified to Phosphoserine. At T866 the chain carries Phosphothreonine. At S868 the chain carries Phosphoserine. Residues 999–1023 (AWYKGSPKHPIGKTQLLPTSKPVDL) are disordered.

The protein localises to the nucleus. Functionally, GTPase activator for the Rho-type GTPases by converting them to an inactive GDP-bound state. This chain is Rho GTPase-activating protein 11A, found in Homo sapiens (Human).